The sequence spans 229 residues: MTEVYDLEITTNATDFPMEKKYPAGMSLNDLKKKLELVVGTTVDSMRIQLFDGDDQLKGELTDGAKSLKDLGVRDGYRIHAVDVTGGNEDFKDESMVEKYEMSDDTYGKRTDSVRAWKKKMQEEQGSAAPMENESDKLNEEAAKNIMVGNRCEVTVGAQMARRGEVAYVGATKFKEGVWVGVKYDEPVGKNDGSVAGVRYFDCDPKYGGFVRPVDVKVGDFPELSIDEI.

Positions 170–212 constitute a CAP-Gly domain; sequence GATKFKEGVWVGVKYDEPVGKNDGSVAGVRYFDCDPKYGGFVR.

This sequence belongs to the TBCB family. In terms of assembly, supercomplex made of cofactors A to E. Cofactors A and D function by capturing and stabilizing tubulin in a quasi-native conformation. Cofactor E binds to the cofactor D-tubulin complex; interaction with cofactor C then causes the release of tubulin polypeptides that are committed to the native state.

It is found in the cytoplasm. The protein localises to the cytoskeleton. Binds to alpha-tubulin folding intermediates after their interaction with cytosolic chaperonin in the pathway leading from newly synthesized tubulin to properly folded heterodimer. The protein is Tubulin-specific chaperone B of Caenorhabditis elegans.